We begin with the raw amino-acid sequence, 113 residues long: Pro-corazonin (113 aa).

The N-terminal stretch at 1–19 is a signal peptide; the sequence is MATNITMFLIVITLTSVAA. Pyrrolidone carboxylic acid is present on Gln20. Asparagine amide is present on Asn30. Residues 74 to 96 are disordered; the sequence is LGPCDTSKTRSTTNPSDTNTSAV. A compositionally biased stretch (polar residues) spans 82 to 96; the sequence is TRSTTNPSDTNTSAV.

It belongs to the corazonin family. Four pairs of lateral neurosecretory cells in the brains of late instar larvae, pupae and adults.

It is found in the secreted. In terms of biological role, cardioactive peptide. Corazonin is probably involved in the physiological regulation of the heart beat. The protein is Pro-corazonin of Galleria mellonella (Greater wax moth).